The chain runs to 216 residues: Ethylene-inducing xylanase (216 aa).

A signal peptide spans 1 to 19 (MVSFSSLFVAACAAVTAFA). Residues 28–216 (AITTSQQGTS…SSGSSDITVS (189 aa)) enclose the GH11 domain. The active-site Nucleophile is the glutamate 112. Glutamate 203 (proton donor) is an active-site residue.

It belongs to the glycosyl hydrolase 11 (cellulase G) family.

It is found in the secreted. It catalyses the reaction Endohydrolysis of (1-&gt;4)-beta-D-xylosidic linkages in xylans.. It functions in the pathway glycan degradation; xylan degradation. Endo-1,4-beta-xylanase involved in the hydrolysis of xylan, a major structural heterogeneous polysaccharide found in plant biomass representing the second most abundant polysaccharide in the biosphere, after cellulose. Acts as a pathogen-associated molecular pattern (PAMP) that can trigger plant cell death. Triggers a series of immune responses in citrus fruit and enhanced the resistance of citrus and other fruit against fungal pathogens. The sequence is that of Ethylene-inducing xylanase from Penicillium digitatum (strain Pd1 / CECT 20795) (Green mold).